The sequence spans 440 residues: Glycerophosphocholine cholinephosphodiesterase ENPP6 (440 aa).

The signal sequence occupies residues 1–22 (MAVKLGTLLLALALGLAQPASA). 3 residues coordinate substrate: Asp-32, Ser-71, and Asn-92. Zn(2+)-binding residues include Asp-32 and Ser-71. Ser-71 serves as the catalytic Nucleophile. Ser-71 is subject to Phosphoserine. 2 N-linked (GlcNAc...) asparagine glycosylation sites follow: Asn-100 and Asn-118. An intrachain disulfide couples Cys-142 to Cys-154. Residue Asp-193 coordinates substrate. Zn(2+)-binding residues include Asp-193, His-197, Asp-240, and His-241. Residue His-241 coordinates substrate. The N-linked (GlcNAc...) asparagine glycan is linked to Asn-341. His-354 lines the substrate pocket. His-354 lines the Zn(2+) pocket. Asn-404 carries an N-linked (GlcNAc...) asparagine glycan. Residue Ser-419 is the site of GPI-anchor amidated serine attachment. A propeptide spans 420-440 (TAPPVWPSHCALALILLFLLA) (removed in mature form).

This sequence belongs to the nucleotide pyrophosphatase/phosphodiesterase family. Homodimer; disulfide-linked. Homotetramer. Zn(2+) serves as cofactor. In terms of tissue distribution, predominantly expressed in kidney and brain. In the kidney, expressed specifically in the proximal tubules and thin descending limbs of Henle (at protein level).

It localises to the cell membrane. It catalyses the reaction sn-glycerol 3-phosphocholine + H2O = phosphocholine + glycerol + H(+). The enzyme catalyses a 1-acyl-sn-glycero-3-phosphocholine + H2O = a 1-acyl-sn-glycerol + phosphocholine + H(+). The catalysed reaction is a 1-O-alkyl-sn-glycero-3-phosphocholine + H2O = a 1-O-alkyl-sn-glycerol + phosphocholine + H(+). It carries out the reaction 1-dodecanoyl-sn-glycero-3-phosphocholine + H2O = 1-dodecanoyl-sn-glycerol + phosphocholine + H(+). It catalyses the reaction 1-hexadecanoyl-sn-glycero-3-phosphocholine + H2O = 1-hexadecanoyl-sn-glycerol + phosphocholine + H(+). The enzyme catalyses 1-(5Z,8Z,11Z,14Z-eicosatetraenoyl)-sn-glycero-3-phosphocholine + H2O = 1-(5Z,8Z,11Z,14Z-eicosatetraenoyl)-sn-glycerol + phosphocholine + H(+). The catalysed reaction is 1-tetradecanoyl-sn-glycero-3-phosphocholine + H2O = 1-tetradecanoyl-sn-glycerol + phosphocholine + H(+). It carries out the reaction sphing-4-enine-phosphocholine + H2O = sphing-4-enine + phosphocholine + H(+). It catalyses the reaction 1-(9Z-octadecenoyl)-sn-glycero-3-phosphocholine + H2O = 1-(9Z-octadecenoyl)-sn-glycerol + phosphocholine + H(+). The enzyme catalyses 1-(9Z,12Z)-octadecadienoyl-sn-glycero-3-phosphocholine + H2O = 1-(9Z,12Z-octadecadienoyl)-sn-glycerol + phosphocholine + H(+). The catalysed reaction is glycero-2-phosphocholine + H2O = phosphocholine + glycerol + H(+). With respect to regulation, inhibited by EDTA and EGTA in vitro. Its function is as follows. Choline-specific glycerophosphodiesterase that hydrolyzes glycerophosphocholine (GPC) and lysophosphatidylcholine (LPC) and contributes to supplying choline to the cells. Has a preference for LPC with short (12:0 and 14:0) or polyunsaturated (18:2 and 20:4) fatty acids. In vitro, hydrolyzes only choline-containing lysophospholipids, such as sphingosylphosphorylcholine (SPC), platelet-activating factor (PAF) and lysoPAF, but not other lysophospholipids. In Homo sapiens (Human), this protein is Glycerophosphocholine cholinephosphodiesterase ENPP6.